The sequence spans 238 residues: Ion-translocating oxidoreductase complex subunit E (238 aa).

A run of 5 helical transmembrane segments spans residues 41 to 61 (LGLGLATMLVLACSNAAVSLV), 71 to 91 (LPAFVMIIAALTTCIELLMQA), 95 to 115 (ELYQVLGIFIPLITTNCVILG), 130 to 150 (SFDGLLMGLGFALVLLVLGGL), and 184 to 204 (GFLLAILPPGAFIMLGLLIAL).

This sequence belongs to the NqrDE/RnfAE family. As to quaternary structure, the complex is composed of six subunits: RnfA, RnfB, RnfC, RnfD, RnfE and RnfG.

Its subcellular location is the cell inner membrane. Functionally, part of a membrane-bound complex that couples electron transfer with translocation of ions across the membrane. The polypeptide is Ion-translocating oxidoreductase complex subunit E (Pseudomonas aeruginosa (strain UCBPP-PA14)).